The sequence spans 122 residues: Large ribosomal subunit protein uL18 (122 aa).

Over residues 1–19 (MTKLSRKLQTQKRHRRLRR) the composition is skewed to basic residues. Residues 1–21 (MTKLSRKLQTQKRHRRLRRSV) are disordered.

The protein belongs to the universal ribosomal protein uL18 family. As to quaternary structure, part of the 50S ribosomal subunit; part of the 5S rRNA/L5/L18/L25 subcomplex. Contacts the 5S and 23S rRNAs.

Its function is as follows. This is one of the proteins that bind and probably mediate the attachment of the 5S RNA into the large ribosomal subunit, where it forms part of the central protuberance. This Prochlorococcus marinus (strain MIT 9312) protein is Large ribosomal subunit protein uL18.